We begin with the raw amino-acid sequence, 464 residues long: Probable mannosyltransferase KTR4 (464 aa).

Topologically, residues Met1–Pro11 are cytoplasmic. Residues Val12–Ala32 traverse the membrane as a helical; Signal-anchor for type II membrane protein segment. The interval Asn33 to Ala130 is stem region. At Asn33 to Tyr464 the chain is on the lumenal side. Residues Gly131–Tyr464 form a catalytic region. The active-site Nucleophile is the Glu352.

Belongs to the glycosyltransferase 15 family.

It is found in the membrane. In terms of biological role, possible glycosyltransferase that transfers an alpha-D-mannosyl residue from GDP-mannose into lipid-linked oligosaccharide, forming an alpha-(1-&gt;2)-D-mannosyl-D-mannose linkage. This is Probable mannosyltransferase KTR4 (KTR4) from Saccharomyces cerevisiae (strain ATCC 204508 / S288c) (Baker's yeast).